The chain runs to 1755 residues: Gag-Pro-Pol polyprotein (1755 aa).

A lipid anchor (N-myristoyl glycine; by host) is attached at Gly2. Composition is skewed to basic and acidic residues over residues 151–169 and 178–191; these read YDEPYEEKEKADKNEEKDH and QRKENSEGKRKEKD. Residues 151–191 form a disordered region; the sequence is YDEPYEEKEKADKNEEKDHVRKIKKVVQRKENSEGKRKEKD. The PTAP/PSAP motif motif lies at 305 to 308; it reads PSAP. 2 consecutive CCHC-type zinc fingers follow at residues 525–542 and 552–569; these read PVCFSCGKTGHIRKDCKD and GLCPRCKKGYHWKSECKS. The interval 572-631 is disordered; the sequence is DKDGNPLPPLETNAENSKNLVKGQSPSPAQKGDGVKGSGLNPEAPPFTIHDLPRGTPGSA. Polar residues predominate over residues 584-599; it reads NAENSKNLVKGQSPSP. Residues 766 to 841 enclose the Peptidase A2 domain; it reads FLGLLDTGAD…LPFTLWGRDI (76 aa). Asp771 functions as the Protease; shared with dimeric partner in the catalytic mechanism. One can recognise a Reverse transcriptase domain in the interval 905–1093; the sequence is LQLGHLEESN…DNLKYLGTHI (189 aa). Mg(2+)-binding residues include Asp970, Asp1045, Asp1046, Asp1316, Glu1346, Asp1366, and Asp1429. The region spanning 1307–1437 is the RNase H type-1 domain; sequence LEKGIVIFTD…ADSLTRILTA (131 aa). The Integrase-type zinc-finger motif lies at 1436-1477; the sequence is TALESAQESHALHHQNAAALRFQFHITREQAREIVKLCPNCP. His1445, His1449, Cys1473, and Cys1476 together coordinate Zn(2+). Residues 1490-1647 enclose the Integrase catalytic domain; sequence RGLKPRVLWQ…TAAERHWGPI (158 aa). Residues Asp1501, Asp1558, and Glu1594 each contribute to the Mg(2+) site. A DNA-binding region (integrase-type) is located at residues 1653 to 1702; the sequence is PMVMWKDLLTGSWKGPDVLITAGRGYACVFPQDAETPIWVPDRFIRPFTE. Residues 1699–1755 form a disordered region; the sequence is PFTERKEATPTPGTAEKTPPRDEKDQQESPKNESSPHQREDGLATSAGVDLRSGGGP. A compositionally biased stretch (basic and acidic residues) spans 1716-1740; the sequence is TPPRDEKDQQESPKNESSPHQREDG.

It belongs to the retroviral Pol polyprotein family. Homodimer; when myristoylated. In terms of assembly, homodimer. As to quaternary structure, homooctamer. Homotrimer. Mg(2+) serves as cofactor. Specific enzymatic cleavages in vivo yield mature proteins. In terms of processing, released by autocatalytic processing. Post-translationally, myristoylated. Myristoylation of the matrix (MA) domain mediates the transport and binding of Gag polyproteins to the host plasma membrane and is required for the assembly of viral particles.

The protein localises to the virion. It carries out the reaction DNA(n) + a 2'-deoxyribonucleoside 5'-triphosphate = DNA(n+1) + diphosphate. It catalyses the reaction Endonucleolytic cleavage to 5'-phosphomonoester.. The catalysed reaction is dUTP + H2O = dUMP + diphosphate + H(+). Its activity is regulated as follows. Inhibited by pepstatin A. Functionally, matrix protein. Its function is as follows. Nucleocapsid protein p14: Binds strongly to viral nucleic acids and promote their aggregation. Also destabilizes the nucleic acids duplexes via highly structured zinc-binding motifs. In terms of biological role, capsid protein. NC-dUTPase has dUTPase activity, thereby preventing incorporation of uracil into DNA. Functionally, the aspartyl protease mediates proteolytic cleavages of Gag and Gag-Pol polyproteins during or shortly after the release of the virion from the plasma membrane. Cleavages take place as an ordered, step-wise cascade to yield mature proteins. This process is called maturation. Displays maximal activity during the budding process just prior to particle release from the cell. Its function is as follows. RT is a multifunctional enzyme that converts the viral dimeric RNA genome into dsDNA in the cytoplasm, shortly after virus entry into the cell. This enzyme displays a DNA polymerase activity that can copy either DNA or RNA templates, and a ribonuclease H (RNase H) activity that cleaves the RNA strand of RNA-DNA heteroduplexes in a partially processive 3' to 5' endonucleasic mode. Conversion of viral genomic RNA into dsDNA requires many steps. A tRNA binds to the primer-binding site (PBS) situated at the 5' end of the viral RNA. RT uses the 3' end of the tRNA primer to perfom a short round of RNA-dependent minus-strand DNA synthesis. The reading proceeds through the U5 region and ends after the repeated (R) region which is present at both ends of viral RNA. The portion of the RNA-DNA heteroduplex is digested by the RNase H, resulting in a ssDNA product attached to the tRNA primer. This ssDNA/tRNA hybridizes with the identical R region situated at the 3' end of viral RNA. This template exchange, known as minus-strand DNA strong stop transfer, can be either intra- or intermolecular. RT uses the 3' end of this newly synthesized short ssDNA to perfom the RNA-dependent minus-strand DNA synthesis of the whole template. RNase H digests the RNA template except for a polypurine tract (PPT) situated at the 5' end of the genome. It is not clear if both polymerase and RNase H activities are simultaneous. RNase H probably can proceed both in a polymerase-dependent (RNA cut into small fragments by the same RT performing DNA synthesis) and a polymerase-independent mode (cleavage of remaining RNA fragments by free RTs). Secondly, RT performs DNA-directed plus-strand DNA synthesis using the PPT that has not been removed by RNase H as primers. PPT and tRNA primers are then removed by RNase H. The 3' and 5' ssDNA PBS regions hybridize to form a circular dsDNA intermediate. Strand displacement synthesis by RT to the PBS and PPT ends produces a blunt ended, linear dsDNA copy of the viral genome that includes long terminal repeats (LTRs) at both ends. In terms of biological role, catalyzes viral DNA integration into the host chromosome, by performing a series of DNA cutting and joining reactions. This chain is Gag-Pro-Pol polyprotein (gag-pro-pol), found in Mus musculus (Mouse).